The sequence spans 120 residues: Myohemerythrin (120 aa).

His-26, His-56, Glu-60, His-75, His-79, His-108, and Asp-113 together coordinate Fe cation.

This sequence belongs to the hemerythrin family. As to quaternary structure, monomer.

Its subcellular location is the cytoplasm. In terms of biological role, myohemerythrin is an oxygen-binding protein found in the retractor muscles of certain worms. The oxygen-binding site contains two iron atoms. This chain is Myohemerythrin, found in Theromyzon tessulatum (Duck leech).